A 242-amino-acid chain; its full sequence is Probable inactive serine protease 58 (242 aa).

Positions 1 to 17 are cleaved as a signal peptide; the sequence is MNLILLWALLNLPVALT. One can recognise a Peptidase S1 domain in the interval 18–240; it reads FDPNYKDDIT…YIPWIENTIQ (223 aa). Cystine bridges form between cysteine 41–cysteine 57, cysteine 134–cysteine 202, cysteine 166–cysteine 181, and cysteine 192–cysteine 216. A glycan (N-linked (GlcNAc...) asparagine) is linked at asparagine 157.

Belongs to the peptidase S1 family.

It localises to the secreted. This is Probable inactive serine protease 58 (PRSS58) from Bos taurus (Bovine).